A 536-amino-acid chain; its full sequence is Fanconi anemia group E protein (536 aa).

Positions 150–371 (MEGASPLSER…VLTRSLFLGR (222 aa)) are interaction with FANCC. Positions 171–252 (LGLGGRRLKS…ADGGSASPIK (82 aa)) are disordered. Residues 230–239 (EKERPEHKSL) are compositionally biased toward basic and acidic residues. Residue Ser249 is modified to Phosphoserine. A Phosphothreonine; by CHEK1 modification is found at Thr346. Phosphoserine; by CHEK1 is present on Ser374.

Belongs to the multisubunit FA complex composed of FANCA, FANCB, FANCC, FANCE, FANCF, FANCG, FANCL/PHF9 and FANCM. The complex is not found in FA patients. Interacts with FANCC and FANCD2. Phosphorylated. Phosphorylation by CHEK1 at Thr-346 and Ser-374 regulates its function in DNA cross-links repair. Post-translationally, ubiquitinated. Phosphorylation by CHEK1 induces polyubiquitination and degradation.

It localises to the nucleus. Its function is as follows. As part of the Fanconi anemia (FA) complex functions in DNA cross-links repair. Required for the nuclear accumulation of FANCC and provides a critical bridge between the FA complex and FANCD2. The sequence is that of Fanconi anemia group E protein (FANCE) from Homo sapiens (Human).